A 337-amino-acid chain; its full sequence is Holliday junction branch migration complex subunit RuvB (337 aa).

The segment at methionine 1–tyrosine 180 is large ATPase domain (RuvB-L). ATP contacts are provided by residues leucine 19, arginine 20, glycine 61, lysine 64, threonine 65, threonine 66, glutamate 127–phenylalanine 129, arginine 170, tyrosine 180, and arginine 217. Position 65 (threonine 65) interacts with Mg(2+). The segment at threonine 181–glutamate 251 is small ATPAse domain (RuvB-S). Residues aspartate 254–phenylalanine 337 are head domain (RuvB-H). Residues arginine 309 and arginine 314 each contribute to the DNA site.

Belongs to the RuvB family. As to quaternary structure, homohexamer. Forms an RuvA(8)-RuvB(12)-Holliday junction (HJ) complex. HJ DNA is sandwiched between 2 RuvA tetramers; dsDNA enters through RuvA and exits via RuvB. An RuvB hexamer assembles on each DNA strand where it exits the tetramer. Each RuvB hexamer is contacted by two RuvA subunits (via domain III) on 2 adjacent RuvB subunits; this complex drives branch migration. In the full resolvosome a probable DNA-RuvA(4)-RuvB(12)-RuvC(2) complex forms which resolves the HJ.

It localises to the cytoplasm. The catalysed reaction is ATP + H2O = ADP + phosphate + H(+). Its function is as follows. The RuvA-RuvB-RuvC complex processes Holliday junction (HJ) DNA during genetic recombination and DNA repair, while the RuvA-RuvB complex plays an important role in the rescue of blocked DNA replication forks via replication fork reversal (RFR). RuvA specifically binds to HJ cruciform DNA, conferring on it an open structure. The RuvB hexamer acts as an ATP-dependent pump, pulling dsDNA into and through the RuvAB complex. RuvB forms 2 homohexamers on either side of HJ DNA bound by 1 or 2 RuvA tetramers; 4 subunits per hexamer contact DNA at a time. Coordinated motions by a converter formed by DNA-disengaged RuvB subunits stimulates ATP hydrolysis and nucleotide exchange. Immobilization of the converter enables RuvB to convert the ATP-contained energy into a lever motion, pulling 2 nucleotides of DNA out of the RuvA tetramer per ATP hydrolyzed, thus driving DNA branch migration. The RuvB motors rotate together with the DNA substrate, which together with the progressing nucleotide cycle form the mechanistic basis for DNA recombination by continuous HJ branch migration. Branch migration allows RuvC to scan DNA until it finds its consensus sequence, where it cleaves and resolves cruciform DNA. The polypeptide is Holliday junction branch migration complex subunit RuvB (Citrifermentans bemidjiense (strain ATCC BAA-1014 / DSM 16622 / JCM 12645 / Bem) (Geobacter bemidjiensis)).